The primary structure comprises 265 residues: Esterase claE (265 aa).

Catalysis depends on charge relay system residues serine 121, aspartate 211, and histidine 239.

This sequence belongs to the LovG family.

The protein operates within secondary metabolite biosynthesis. Esterase; part of the cla gene cluster that produces clavatol and ortho-quinone methide. The clavatol biosynthesis cluster cla and the terrestric acid cluster tra are both involved in the production of peniphenones and penilactones. The non-reducing PKS claF is responsible for the formation of clavatol from successive condensations of 3 malonyl-CoA units, presumably with a simple acetyl-CoA starter unit, and 2 methylation steps. The esterase claE probably collaborates with claF by catalyzing the hydrolysis of ACP-bound acyl intermediates to free the ACP from stalled intermediates. The clavatol oxidase claD then converts clavatol to hydroxyclavatol. Spontaneous dehydration of hydroxyclavatol leads to the accumulation of the highly active ortho-quinone methide. On the other hand, the PKS-NRPS hybrid traA is involved in the formation of crustosic acid, with the help of traB and traD. The polyketide synthase module (PKS) of traA is responsible for the synthesis of the polyketide backbone via the condensation of an acetyl-CoA starter unit with 3 malonyl-CoA units. The downstream nonribosomal peptide synthetase (NRPS) module then amidates the carboxyl end of the polyketide with L-malic acid. Because traA lacks a designated enoylreductase (ER) domain, the required activity is provided the enoyl reductase traG. Crustosic acid undergoes decarboxylation and isomerization to the terrestric acid, catalyzed by the 2-oxoglutarate-dependent dioxygenase traH. Both acids are further converted to the 2 gamma-butyrolactones (R)-5-methyltetronic acid and (S)-5-carboxylmethyltetronic acid, with involvement of the cytochrome P450 monooxygenase claJ. Spontaneous addition of the methide to these gamma-butyrolactones leads to peniphenone D and penilactone D, which undergo again stereospecific attacking by methide to give penilactones A and B. The polypeptide is Esterase claE (Penicillium crustosum (Blue mold fungus)).